A 140-amino-acid polypeptide reads, in one-letter code: uncharacterized protein (140 aa).

Positions 62–140 are disordered; that stretch reads TEARAGRGGP…PQGRWGPSLG (79 aa). Residues 71 to 94 are compositionally biased toward low complexity; it reads PATARSRVSADSQGGRAGSSSPSS.

This is an uncharacterized protein from Homo sapiens (Human).